Reading from the N-terminus, the 330-residue chain is Aspartate--ammonia ligase (330 aa).

The protein belongs to the class-II aminoacyl-tRNA synthetase family. AsnA subfamily.

It localises to the cytoplasm. It catalyses the reaction L-aspartate + NH4(+) + ATP = L-asparagine + AMP + diphosphate + H(+). It functions in the pathway amino-acid biosynthesis; L-asparagine biosynthesis; L-asparagine from L-aspartate (ammonia route): step 1/1. In Streptococcus pneumoniae serotype 19F (strain G54), this protein is Aspartate--ammonia ligase.